We begin with the raw amino-acid sequence, 63 residues long: Large ribosomal subunit protein uL30 (63 aa).

Belongs to the universal ribosomal protein uL30 family. As to quaternary structure, part of the 50S ribosomal subunit.

In Rickettsia peacockii (strain Rustic), this protein is Large ribosomal subunit protein uL30.